The chain runs to 512 residues: Cytochrome P450 monooxygenase ABA1 (512 aa).

Residues 13 to 32 (HWLSGILAIATVYLATSYII) form a helical membrane-spanning segment. Residue cysteine 458 coordinates heme.

Belongs to the cytochrome P450 family. Heme is required as a cofactor.

The protein resides in the membrane. Its pathway is hormone biosynthesis. Cytochrome P450 monooxygenase involved in the biosynthesis of abscisic acid (ABA), a phytohormone that acts antagonistically toward salicylic acid (SA), jasmonic acid (JA) and ethylene (ETH) signaling, to impede plant defense responses. During pathogen-host interaction, ABA plays a dual role in disease severity by increasing plant susceptibility and accelerating pathogenesis in the fungus itself. The first step of the pathway catalyzes the reaction from farnesyl diphosphate to alpha-ionylideneethane performed by the alpha-ionylideneethane synthase ABA3 via a three-step reaction mechanism involving 2 neutral intermediates, beta-farnesene and allofarnesene. The cytochrome P450 monooxygenase ABA1 might then be involved in the conversion of alpha-ionylideneethane to alpha-ionylideneacetic acid. Alpha-ionylideneacetic acid is further converted to abscisic acid in 2 steps involving the cytochrome P450 monooxygenase ABA2 and the short-chain dehydrogenase/reductase ABA4, via the intermediates 1'-deoxy-ABA or 1',4'-trans-diol-ABA, depending on the order of action of these 2 enzymes. ABA2 is responsible for the hydroxylation of carbon atom C-1' and ABA4 might be involved in the oxidation of the C-4' carbon atom. The polypeptide is Cytochrome P450 monooxygenase ABA1 (Pyricularia oryzae (strain Y34) (Rice blast fungus)).